The following is a 162-amino-acid chain: Putative ureidoglycolate lyase (162 aa).

It belongs to the ureidoglycolate lyase family. Homodimer. Ni(2+) serves as cofactor.

It catalyses the reaction (S)-ureidoglycolate = urea + glyoxylate. It participates in nitrogen metabolism; (S)-allantoin degradation. Functionally, catalyzes the catabolism of the allantoin degradation intermediate (S)-ureidoglycolate, generating urea and glyoxylate. Involved in the utilization of allantoin as nitrogen source. The polypeptide is Putative ureidoglycolate lyase (Agrobacterium fabrum (strain C58 / ATCC 33970) (Agrobacterium tumefaciens (strain C58))).